Reading from the N-terminus, the 2979-residue chain is Polyketide synthase-nonribosomal peptide synthetase TwmB (2979 aa).

In terms of domain architecture, Ketosynthase family 3 (KS3) spans 5–435 (GAEIAIIGSG…GTNAHAILES (431 aa)). Active-site for beta-ketoacyl synthase activity residues include cysteine 176, histidine 315, and histidine 355. A malonyl-CoA:ACP transacylase (MAT) domain region spans residues 549-864 (VFTGQGAQWA…PYTGLFTRGV (316 aa)). Serine 643 (for malonyltransferase activity) is an active-site residue. The tract at residues 936 to 1070 (HDLLGHLTPN…GRVRIHLGEA (135 aa)) is N-terminal hotdog fold. A dehydratase (DH) domain region spans residues 936 to 1234 (HDLLGHLTPN…ECVPFSRQTA (299 aa)). Residues 936–1235 (HDLLGHLTPN…CVPFSRQTAK (300 aa)) form the PKS/mFAS DH domain. The Proton acceptor; for dehydratase activity role is filled by histidine 968. Positions 1085 to 1235 (LVSVSEKKFY…CVPFSRQTAK (151 aa)) are C-terminal hotdog fold. Catalysis depends on aspartate 1141, which acts as the Proton donor; for dehydratase activity. The interval 1387–1572 (NFTAHLAGIL…GIDTSTVEQP (186 aa)) is inactive methyltransferase (MT) domain. A ketoreductase (KR)domain region spans residues 2098 to 2271 (TYWLVGLTGG…AASVMDIGAV (174 aa)). Residues 2380-2465 (RNNEEAYGIV…ELVDTATEAI (86 aa)) enclose the Carrier domain. At serine 2425 the chain carries O-(pantetheine 4'-phosphoryl)serine. Residues 2476–2497 (YPAEQTSSQNSDSGQDMASSFD) are disordered. Residues 2479–2497 (EQTSSQNSDSGQDMASSFD) show a composition bias toward polar residues. A condensation region spans residues 2534–2970 (KSIPVSFTQA…MTLGQAALAE (437 aa)).

Interacts with TwmE. The cofactor is pantetheine 4'-phosphate.

The enzyme catalyses 5-aminopentanoate + 7 malonyl-CoA + acetyl-CoA + 11 NADPH + 17 H(+) = wortmanamide A + 7 CO2 + 11 NADP(+) + 8 CoA + 6 H2O. It catalyses the reaction 5-aminopentanoate + 8 malonyl-CoA + acetyl-CoA + 13 NADPH + 20 H(+) = wortmanamide B + 8 CO2 + 13 NADP(+) + 9 CoA + 7 H2O. It functions in the pathway secondary metabolite biosynthesis. In terms of biological role, polyketide synthase-nonribosomal peptide synthetase; part of the gene cluster that mediates the biosynthesis of wortmanamides A and B, reduced long-chain polyketides amidated with a specific omega-amino acid, 5-aminopentanoic acid (5PA). The PKS modules of TwmB are involved in the synthesis of the polyketide backbone, whereas the non-canonical C domain of TwmB is a bonafide condensation domain that specifically selects 5PA and catalyzes amidation to release polyketide chain. The C domain clearly prefers C16 and C18 fatty acyl substrates, which is consistent with simultaneous formation of both octaketide and nonaketide acyl amides wortmanamides A and B. Because TwmB lacks a designated enoylreductase (ER) domain, the required activity is provided the enoyl reductase TwmE. The roles of the remaining enzymes have still to be clarified. This is Polyketide synthase-nonribosomal peptide synthetase TwmB from Talaromyces wortmannii (Penicillium wortmannii).